We begin with the raw amino-acid sequence, 122 residues long: Thioredoxin H-type (122 aa).

In terms of domain architecture, Thioredoxin spans 2–118; the sequence is AAEEGVVIAC…IVKHVGATAA (117 aa). A disulfide bridge links C40 with C43.

The protein resides in the cytoplasm. Participates in various redox reactions through the reversible oxidation of the active center dithiol to a disulfide. The H form is known to activate a number of cytosolic enzymes. The sequence is that of Thioredoxin H-type (TRXH) from Oryza sativa subsp. indica (Rice).